The sequence spans 133 residues: MEPPLPTPMLLLLLLLLSSSAALPAPPRTPRHSDGMFTSELSRLQDSARLQRLLQGLVGKRSEQDTENIPENSLARSKPLEDQLCLLWSNTQTLQDWLLPRLSLDGSLSLWLPPGPRSAVDRSEWTETTRPPR.

The first 22 residues, 1–22 (MEPPLPTPMLLLLLLLLSSSAA), serve as a signal peptide directing secretion. Positions 23-30 (LPAPPRTP) are excised as a propeptide. A Valine amide modification is found at Val58. Ser62 carries the phosphoserine modification. The propeptide occupies 62–133 (SEQDTENIPE…EWTETTRPPR (72 aa)).

This sequence belongs to the glucagon family. Highly expressed in the intestine. Also expressed in the hippocampus, cerebellum and the brain stem in adult mouse brain. In the hippocampus, expressed in the dentate gyrus, the hilus and the molecular layer.

It localises to the secreted. Functionally, hormone involved in different processes, such as regulation of the pH of the duodenal content, food intake and water homeostasis. Exerts its biological effects by binding to secretin receptor (SCTR), a G-protein coupled receptor expressed in the basolateral domain of several cells. Acts as a key gastrointestinal hormone by regulating the pH of the duodenal content. Secreted by S cells of the duodenum in the crypts of Lieberkuehn and regulates the pH of the duodenum by (1) inhibiting the secretion of gastric acid from the parietal cells of the stomach and (2) stimulating the production of bicarbonate (NaHCO(3)) from the ductal cells of the pancreas. Production of bicarbonate is essential to neutralize the pH and ensure no damage is done to the small intestine by the gastric acid. In addition to regulating the pH of the duodenal content, plays a central role in diet induced thermogenesis: acts as a non-sympathetic brown fat (BAT) activator mediating prandial thermogenesis, which consequentially induces satiation. Mechanistically, secretin released by the gut after a meal binds to secretin receptor (SCTR) in brown adipocytes, activating brown fat thermogenesis by stimulating lipolysis, which is sensed in the brain and promotes satiation. Also able to stimulate lipolysis in white adipocytes. Also plays an important role in cellular osmoregulation: released into the systemic circulation in response to hyperosmolality and acts at different levels in the hypothalamus, pituitary and kidney to regulate water homeostasis. Also plays a role in the central nervous system, possibly by acting as a neuropeptide hormone: required for hippocampal synaptic function and neural progenitor cells maintenance. This is Secretin from Mus musculus (Mouse).